The following is a 128-amino-acid chain: Arsenic resistance transcriptional regulator ArsR1 (128 aa).

The region spanning 11 to 103 (MREILTPPIV…AMLKGVVDAN (93 aa)) is the HTH arsR-type domain. Arsenite contacts are provided by Cys-43 and Cys-45. Residues 44–67 (VCELTHALELSQPKISRHLAQLRE) constitute a DNA-binding region (H-T-H motif).

In terms of assembly, homodimer.

Its subcellular location is the cytoplasm. Binds arsenite and regulates the expression of arsenic efflux pumps. In vitro, also binds antimony and bismuth, but not arsenate. The sequence is that of Arsenic resistance transcriptional regulator ArsR1 from Pseudomonas putida (strain ATCC 47054 / DSM 6125 / CFBP 8728 / NCIMB 11950 / KT2440).